Reading from the N-terminus, the 220-residue chain is Adenylate kinase (220 aa).

12 to 17 is a binding site for ATP; the sequence is GAGKGT. Residues 32–62 are NMP; sequence STGDIFRDIVKKENDELGKKIKEIMERGELV. Residues threonine 33, arginine 38, 60-62, 88-91, and glutamine 95 contribute to the AMP site; these read ELV and GYPR. Residues 129 to 166 form an LID region; that stretch reads ARRICPKCGRIYNLISLPPKEDELCDDCKVKLVQREDD. Arginine 130 lines the ATP pocket. Residues cysteine 133 and cysteine 136 each coordinate Zn(2+). Residue 139 to 140 participates in ATP binding; that stretch reads IY. Zn(2+) is bound by residues cysteine 153 and cysteine 156. AMP is bound by residues arginine 163 and arginine 174. Isoleucine 202 lines the ATP pocket.

The protein belongs to the adenylate kinase family. Monomer.

The protein resides in the cytoplasm. The catalysed reaction is AMP + ATP = 2 ADP. The protein operates within purine metabolism; AMP biosynthesis via salvage pathway; AMP from ADP: step 1/1. Its function is as follows. Catalyzes the reversible transfer of the terminal phosphate group between ATP and AMP. Plays an important role in cellular energy homeostasis and in adenine nucleotide metabolism. This is Adenylate kinase from Thermotoga petrophila (strain ATCC BAA-488 / DSM 13995 / JCM 10881 / RKU-1).